A 1207-amino-acid chain; its full sequence is DNA-directed RNA polymerase subunit beta' (1207 aa).

Zn(2+) contacts are provided by C60, C62, C75, and C78. Mg(2+) contacts are provided by D450, D452, and D454. C818, C892, C899, and C902 together coordinate Zn(2+).

Belongs to the RNA polymerase beta' chain family. The RNAP catalytic core consists of 2 alpha, 1 beta, 1 beta' and 1 omega subunit. When a sigma factor is associated with the core the holoenzyme is formed, which can initiate transcription. It depends on Mg(2+) as a cofactor. Zn(2+) is required as a cofactor.

The catalysed reaction is RNA(n) + a ribonucleoside 5'-triphosphate = RNA(n+1) + diphosphate. DNA-dependent RNA polymerase catalyzes the transcription of DNA into RNA using the four ribonucleoside triphosphates as substrates. This Lactococcus lactis subsp. cremoris (strain MG1363) protein is DNA-directed RNA polymerase subunit beta'.